A 179-amino-acid chain; its full sequence is Large ribosomal subunit protein uL5 (179 aa).

The protein belongs to the universal ribosomal protein uL5 family. As to quaternary structure, part of the 50S ribosomal subunit; part of the 5S rRNA/L5/L18/L25 subcomplex. Contacts the 5S rRNA and the P site tRNA. Forms a bridge to the 30S subunit in the 70S ribosome.

Functionally, this is one of the proteins that bind and probably mediate the attachment of the 5S RNA into the large ribosomal subunit, where it forms part of the central protuberance. In the 70S ribosome it contacts protein S13 of the 30S subunit (bridge B1b), connecting the 2 subunits; this bridge is implicated in subunit movement. Contacts the P site tRNA; the 5S rRNA and some of its associated proteins might help stabilize positioning of ribosome-bound tRNAs. The polypeptide is Large ribosomal subunit protein uL5 (Variovorax paradoxus (strain S110)).